Here is a 1529-residue protein sequence, read N- to C-terminus: uncharacterized protein (1529 aa).

Residues Met-1–Asn-11 are compositionally biased toward low complexity. Disordered stretches follow at residues Met-1–Val-85, Leu-335–Ser-371, Leu-660–Ala-694, Asn-798–Ser-843, Ser-1016–Asn-1035, Gln-1334–Gln-1364, and Gln-1454–Pro-1497. Residues Gln-24–Ser-42 show a composition bias toward polar residues. A compositionally biased stretch (low complexity) spans Ile-51–Ser-79. Low complexity predominate over residues Asn-810–Asn-833. 2 stretches are compositionally biased toward polar residues: residues Val-834–Ser-843 and Ser-1016–Asp-1027. Residues Gln-1454–Ser-1494 show a composition bias toward low complexity.

This is an uncharacterized protein from Dictyostelium discoideum (Social amoeba).